Here is a 248-residue protein sequence, read N- to C-terminus: ATP synthase subunit a (248 aa).

Residues 1–3 constitute a propeptide, removed in mature form; the sequence is MLY. 7 helical membrane-spanning segments follow: residues 24–44, 86–106, 117–137, 146–166, 183–203, 205–225, and 227–247; these read MSLTNSSLYFIIAAIISFFIF, IYMPLIFSLFIIILVSNLVGL, FALPLGLSVTIIISVTVIGFV, VLLPSGTPLGLVPLLLVVELL, ITSGHILLNIISGFLFKTSGI, LLFVIIPFTLFIALTGLELIV, and ILQAYVWSILTCIYIKDSLIL.

It belongs to the ATPase A chain family. In terms of assembly, F-type ATPases have 2 components, CF(1) - the catalytic core - and CF(0) - the membrane proton channel. CF(1) has five subunits: alpha(3), beta(3), gamma(1), delta(1), epsilon(1). CF(0) has three main subunits: a, b and c.

Its subcellular location is the mitochondrion inner membrane. Functionally, mitochondrial membrane ATP synthase (F(1)F(0) ATP synthase or Complex V) produces ATP from ADP in the presence of a proton gradient across the membrane which is generated by electron transport complexes of the respiratory chain. F-type ATPases consist of two structural domains, F(1) - containing the extramembraneous catalytic core and F(0) - containing the membrane proton channel, linked together by a central stalk and a peripheral stalk. During catalysis, ATP synthesis in the catalytic domain of F(1) is coupled via a rotary mechanism of the central stalk subunits to proton translocation. Key component of the proton channel; it may play a direct role in the translocation of protons across the membrane. In Zancudomyces culisetae (Gut fungus), this protein is ATP synthase subunit a.